A 648-amino-acid polypeptide reads, in one-letter code: MIKITLPDGSIREFAQGVTPMEVAKNISEGFARNVISASFNGTTIETETPLTTDGNLILYTWNDAEGKKAFWHSTSHVMAQALEELYPGIKLTLGPAIANGFYYDVDFEDQKISEADFKKIEDRILEIARGKFDFKMRPVTKAEALEMYKDNVYKTELISNLEDGTITFCDHATFTDLCRGGHIPNTGIIKAVKIMSVAGAYWRGDEKNKQLTRVYGTSFPKQKDLTEYLELLEEAKRRDHRKLGKELELFAFSQKVGQGLPLWLPKGAALRDRLEQFLKRAQKKAGYEQVVSPHIGQKELYVTSGHYAKYGADSFQPIHTPAEGEEFLLKPMNCPHHCEIYNVRPWSYKDLPKRYAEFGTVYRYEQSGELHGLTRVRGFTQDDAHIFCTPEQLDEEFKKVIDLVLYVFGSLGFENFTAQISLRDQEDREKYIGTDENWEKAENAIINAAKDKGLNTVVEYGEAAFYGPKLDFMVKDALGRQWQLGTIQVDYNLPERFELTYKGADNELHRPVMIHRAPFGSMERFIAILLEHTAGNFPLWLMPEQAIILSLSEKYENYAKKVLDLLENHEIRALIDNRNETIGKKIRDAEMQKIPFMLIVGEEEEKNGTISIRRHGQEGKGNITVSIEEFASIVDEEIKKTLKVFTV.

Residues 1–61 (MIKITLPDGS…TTDGNLILYT (61 aa)) form the TGS domain. The segment at 240-539 (DHRKLGKELE…LLEHTAGNFP (300 aa)) is catalytic. The Zn(2+) site is built by Cys335, His386, and His516.

Belongs to the class-II aminoacyl-tRNA synthetase family. Homodimer. Zn(2+) is required as a cofactor.

It localises to the cytoplasm. It carries out the reaction tRNA(Thr) + L-threonine + ATP = L-threonyl-tRNA(Thr) + AMP + diphosphate + H(+). Its function is as follows. Catalyzes the attachment of threonine to tRNA(Thr) in a two-step reaction: L-threonine is first activated by ATP to form Thr-AMP and then transferred to the acceptor end of tRNA(Thr). Also edits incorrectly charged L-seryl-tRNA(Thr). This chain is Threonine--tRNA ligase, found in Flavobacterium johnsoniae (strain ATCC 17061 / DSM 2064 / JCM 8514 / BCRC 14874 / CCUG 350202 / NBRC 14942 / NCIMB 11054 / UW101) (Cytophaga johnsonae).